We begin with the raw amino-acid sequence, 141 residues long: Putative ankyrin repeat protein FPV223 (141 aa).

ANK repeat units follow at residues Ser-21–Lys-50, Cys-54–Lys-83, Arg-85–Ser-114, and Asp-118–Ile-140.

The protein is Putative ankyrin repeat protein FPV223 of Vertebrata (FPV).